The sequence spans 444 residues: Trimethylamine monooxygenase (444 aa).

Positions 12, 37, 39, 45, and 46 each coordinate FAD. NADP(+) is bound by residues W70 and N72. FAD contacts are provided by N72 and V125. NADP(+) contacts are provided by Y170, S202, S203, S205, R226, H227, and N288. 2 residues coordinate FAD: Q315 and T318. Position 409 (R409) interacts with NADP(+).

This sequence belongs to the FMO family. Homodimer. FAD serves as cofactor.

The enzyme catalyses trimethylamine + NADPH + O2 = trimethylamine N-oxide + NADP(+) + H2O. Catalyzes the oxidation of trimethylamine (TMA) to produce trimethylamine N-oxide (TMAO). In vitro, has a broad substrate specificity, oxidizing many nitrogen- and sulfur-containing compounds, including dimethylamine (DMA), dimethylsulfide (DMS), dimethylsulfoxide (DMSO) and methimazole. TMA shows the highest affinity. The protein is Trimethylamine monooxygenase of Pelagibacter sp. (strain HTCC7211).